Reading from the N-terminus, the 245-residue chain is tRNA1(Val) (adenine(37)-N6)-methyltransferase (245 aa).

Belongs to the methyltransferase superfamily. tRNA (adenine-N(6)-)-methyltransferase family.

The protein localises to the cytoplasm. The enzyme catalyses adenosine(37) in tRNA1(Val) + S-adenosyl-L-methionine = N(6)-methyladenosine(37) in tRNA1(Val) + S-adenosyl-L-homocysteine + H(+). Specifically methylates the adenine in position 37 of tRNA(1)(Val) (anticodon cmo5UAC). This is tRNA1(Val) (adenine(37)-N6)-methyltransferase from Salmonella typhi.